Consider the following 270-residue polypeptide: Fluoride-specific ion channel FluC 2 (270 aa).

The next 4 helical transmembrane spans lie at 4–24, 35–55, 67–87, and 96–116; these read IIIL…FIML, LDIL…TALY, IIGT…YGSV, and AFLI…VAVL. G74 and S77 together coordinate Na(+).

This sequence belongs to the fluoride channel Fluc/FEX (TC 1.A.43) family.

Its subcellular location is the cell inner membrane. The enzyme catalyses fluoride(in) = fluoride(out). With respect to regulation, na(+) is not transported, but it plays an essential structural role and its presence is essential for fluoride channel function. Functionally, fluoride-specific ion channel. Important for reducing fluoride concentration in the cell, thus reducing its toxicity. This chain is Fluoride-specific ion channel FluC 2, found in Brucella melitensis biotype 1 (strain ATCC 23456 / CCUG 17765 / NCTC 10094 / 16M).